We begin with the raw amino-acid sequence, 145 residues long: Hemoglobin fetal subunit beta (145 aa).

Residues methionine 1–histidine 145 enclose the Globin domain. Heme b contacts are provided by histidine 62 and histidine 91.

This sequence belongs to the globin family. Heterotetramer of two alpha chains and two beta chains. As to expression, red blood cells.

In terms of biological role, involved in oxygen transport from the lung to the various peripheral tissues. The protein is Hemoglobin fetal subunit beta of Capra hircus (Goat).